We begin with the raw amino-acid sequence, 79 residues long: uncharacterized protein (79 aa).

The protein belongs to the asfivirus D79L family.

This is an uncharacterized protein from Ornithodoros (relapsing fever ticks).